We begin with the raw amino-acid sequence, 344 residues long: S-methyl-5'-thioadenosine phosphorylase (344 aa).

Phosphate is bound by residues Thr45, 88–89 (RH), and 121–122 (SA). Met238 provides a ligand contact to substrate. Ser239 contacts phosphate. 262-264 (DYD) serves as a coordination point for substrate.

This sequence belongs to the PNP/MTAP phosphorylase family. MTAP subfamily. In terms of assembly, homotrimer.

It is found in the cytoplasm. It localises to the nucleus. The catalysed reaction is S-methyl-5'-thioadenosine + phosphate = 5-(methylsulfanyl)-alpha-D-ribose 1-phosphate + adenine. Its pathway is amino-acid biosynthesis; L-methionine biosynthesis via salvage pathway; S-methyl-5-thio-alpha-D-ribose 1-phosphate from S-methyl-5'-thioadenosine (phosphorylase route): step 1/1. In terms of biological role, catalyzes the reversible phosphorylation of S-methyl-5'-thioadenosine (MTA) to adenine and 5-methylthioribose-1-phosphate. Involved in the breakdown of MTA, a major by-product of polyamine biosynthesis. Responsible for the first step in the methionine salvage pathway after MTA has been generated from S-adenosylmethionine. Has broad substrate specificity with 6-aminopurine nucleosides as preferred substrates. In Candida albicans (strain SC5314 / ATCC MYA-2876) (Yeast), this protein is S-methyl-5'-thioadenosine phosphorylase.